We begin with the raw amino-acid sequence, 247 residues long: tRNA uridine(34) hydroxylase (247 aa).

A Rhodanese domain is found at 124-218 (TKQDVIVIDT…YLEDTQNKNN (95 aa)). Cysteine 178 serves as the catalytic Cysteine persulfide intermediate.

This sequence belongs to the TrhO family.

The catalysed reaction is uridine(34) in tRNA + AH2 + O2 = 5-hydroxyuridine(34) in tRNA + A + H2O. Its function is as follows. Catalyzes oxygen-dependent 5-hydroxyuridine (ho5U) modification at position 34 in tRNAs. This chain is tRNA uridine(34) hydroxylase, found in Rickettsia africae (strain ESF-5).